Reading from the N-terminus, the 412-residue chain is Short-chain specific acyl-CoA dehydrogenase, mitochondrial (412 aa).

The N-terminal 24 residues, 1–24, are a transit peptide targeting the mitochondrion; that stretch reads MAAALLARAGGSLGRALRARDWRR. At Thr-27 the chain carries Phosphothreonine. Lys-51 bears the N6-acetyllysine; alternate mark. Lys-51 carries the N6-succinyllysine; alternate modification. Lys-72 carries the N6-acetyllysine modification. Lys-129 is subject to N6-acetyllysine; alternate. Lys-129 bears the N6-succinyllysine; alternate mark. Residues 152 to 161 and 185 to 187 each bind FAD; these read FALSEPGNGS and WIT. Substrate is bound at residue Ser-161. Lys-208 bears the N6-acetyllysine mark. Lys-262 bears the N6-acetyllysine; alternate mark. Position 262 is an N6-succinyllysine; alternate (Lys-262). Residue 269-272 coordinates substrate; sequence DMGR. The residue at position 292 (Lys-292) is an N6-acetyllysine. Arg-297 is a binding site for FAD. Lys-306 is modified (N6-acetyllysine; alternate). N6-succinyllysine; alternate is present on Lys-306. 365–369 contacts FAD; sequence QILGG. The active-site Proton acceptor is Glu-392. An FAD-binding site is contributed by 394–396; the sequence is TSE.

It belongs to the acyl-CoA dehydrogenase family. Homotetramer. It depends on FAD as a cofactor.

It is found in the mitochondrion matrix. It catalyses the reaction a short-chain 2,3-saturated fatty acyl-CoA + oxidized [electron-transfer flavoprotein] + H(+) = a short-chain (2E)-enoyl-CoA + reduced [electron-transfer flavoprotein]. It carries out the reaction butanoyl-CoA + oxidized [electron-transfer flavoprotein] + H(+) = (2E)-butenoyl-CoA + reduced [electron-transfer flavoprotein]. The catalysed reaction is pentanoyl-CoA + oxidized [electron-transfer flavoprotein] + H(+) = (2E)-pentenoyl-CoA + reduced [electron-transfer flavoprotein]. The enzyme catalyses hexanoyl-CoA + oxidized [electron-transfer flavoprotein] + H(+) = (2E)-hexenoyl-CoA + reduced [electron-transfer flavoprotein]. It functions in the pathway lipid metabolism; mitochondrial fatty acid beta-oxidation. In terms of biological role, short-chain specific acyl-CoA dehydrogenase is one of the acyl-CoA dehydrogenases that catalyze the first step of mitochondrial fatty acid beta-oxidation, an aerobic process breaking down fatty acids into acetyl-CoA and allowing the production of energy from fats. The first step of fatty acid beta-oxidation consists in the removal of one hydrogen from C-2 and C-3 of the straight-chain fatty acyl-CoA thioester, resulting in the formation of trans-2-enoyl-CoA. Among the different mitochondrial acyl-CoA dehydrogenases, short-chain specific acyl-CoA dehydrogenase acts specifically on acyl-CoAs with saturated 4 to 6 carbons long primary chains. The polypeptide is Short-chain specific acyl-CoA dehydrogenase, mitochondrial (Acads) (Rattus norvegicus (Rat)).